The primary structure comprises 429 residues: Glutamate-1-semialdehyde 2,1-aminomutase 2 (429 aa).

At Lys-268 the chain carries N6-(pyridoxal phosphate)lysine.

The protein belongs to the class-III pyridoxal-phosphate-dependent aminotransferase family. HemL subfamily. As to quaternary structure, homodimer. Pyridoxal 5'-phosphate is required as a cofactor.

The protein resides in the cytoplasm. The catalysed reaction is (S)-4-amino-5-oxopentanoate = 5-aminolevulinate. The protein operates within porphyrin-containing compound metabolism; protoporphyrin-IX biosynthesis; 5-aminolevulinate from L-glutamyl-tRNA(Glu): step 2/2. In Staphylococcus aureus (strain MRSA252), this protein is Glutamate-1-semialdehyde 2,1-aminomutase 2.